The sequence spans 754 residues: Deadenylation-dependent mRNA-decapping factor pdc2 (754 aa).

The tract at residues 499–754 (LESIWKALYI…MGLDARQLSA (256 aa)) is interaction with lsm1.

This sequence belongs to the PAT1 family. As to quaternary structure, interacts with dcp2. Interacts with lsm1; via C-terminus.

Its subcellular location is the cytoplasm. It is found in the nucleus. The protein localises to the P-body. Activator of decapping that functions as a general and active mechanism of translational repression and required for P-body formation. Stabilizes the 3' terminus of mRNAs and modulates the rates of mRNA-decapping that occur following deadenylation. Might be required for promoting the formation or the stabilization of the preinitiation translation complexes. Necessary for accurate chromosome transmission during cell division. Together with lsm1, recruits the deadenylase ccr4 to P-bodies. The chain is Deadenylation-dependent mRNA-decapping factor pdc2 from Schizosaccharomyces pombe (strain 972 / ATCC 24843) (Fission yeast).